Here is a 321-residue protein sequence, read N- to C-terminus: ATP-dependent 6-phosphofructokinase (321 aa).

Gly-12 is an ATP binding site. ADP-binding positions include 22-26 and 55-60; these read RGVVR and RYSVSD. ATP is bound by residues 73-74 and 103-106; these read RF and GDGS. Asp-104 contributes to the Mg(2+) binding site. Position 127-129 (127-129) interacts with substrate; the sequence is TID. The active-site Proton acceptor is the Asp-129. Arg-156 contributes to the ADP binding site. Substrate is bound by residues Arg-164 and 171-173; that span reads MGR. Residues 187 to 189, Arg-213, and 215 to 217 each bind ADP; these read GCE and KRH. Substrate contacts are provided by residues Glu-224, Arg-245, and 251 to 254; that span reads HIQR.

This sequence belongs to the phosphofructokinase type A (PFKA) family. ATP-dependent PFK group I subfamily. Prokaryotic clade 'B1' sub-subfamily. Homotetramer. The cofactor is Mg(2+).

It localises to the cytoplasm. It carries out the reaction beta-D-fructose 6-phosphate + ATP = beta-D-fructose 1,6-bisphosphate + ADP + H(+). It participates in carbohydrate degradation; glycolysis; D-glyceraldehyde 3-phosphate and glycerone phosphate from D-glucose: step 3/4. With respect to regulation, allosterically activated by ADP and other diphosphonucleosides, and allosterically inhibited by phosphoenolpyruvate. Its function is as follows. Catalyzes the phosphorylation of D-fructose 6-phosphate to fructose 1,6-bisphosphate by ATP, the first committing step of glycolysis. The protein is ATP-dependent 6-phosphofructokinase of Haemophilus influenzae (strain PittEE).